Reading from the N-terminus, the 778-residue chain is Kin of IRRE-like protein 3 (778 aa).

The first 21 residues, 1–21, serve as a signal peptide directing secretion; it reads MRPFQLDLLFLCFFLFSQELG. The Extracellular segment spans residues 22–535; it reads LQKRGCCLVL…GLEAESVPMA (514 aa). Ig-like C2-type domains lie at 48–142, 147–243, 249–330, 335–415, and 419–515; these read YSFS…ARLT, PDDP…TSVT, PPLV…RTVD, PRMT…VTLT, and PPII…IRLK. A disulfide bond links cysteine 69 and cysteine 127. N-linked (GlcNAc...) asparagine glycosylation is present at asparagine 167. Residues cysteine 170 and cysteine 227 are joined by a disulfide bond. Asparagine 253 carries an N-linked (GlcNAc...) asparagine glycan. Cysteines 271 and 314 form a disulfide. Asparagine 324 carries an N-linked (GlcNAc...) asparagine glycan. Cystine bridges form between cysteine 356-cysteine 398 and cysteine 440-cysteine 499. An N-linked (GlcNAc...) asparagine glycan is attached at asparagine 498. Residues 536–556 form a helical membrane-spanning segment; the sequence is VIIGVAVGAGVAFLVLMATIV. The Cytoplasmic portion of the chain corresponds to 557–778; sequence AFCCARSQRN…PLQRRMQTHV (222 aa). Polar residues predominate over residues 727-736; the sequence is CDSSVSSSGK. A disordered region spans residues 727–778; it reads CDSSVSSSGKQDGYVQFDKASKASASSSHHSQSSSQNSDPSRPLQRRMQTHV. Over residues 748 to 762 the composition is skewed to low complexity; sequence KASASSSHHSQSSSQ.

Belongs to the immunoglobulin superfamily. Homodimer; mediates homophilic interactions to promote cell adhesion. Interacts with NPHS1; forms heterodimers with NPHS1. Interacts with NPHS2/podocin (via the C-terminus). Interacts with CASK. Interacts (via extracellular region) with MAP1B. Interacts (via extracellular region) with MYO16. Interacts (via intracellular region) with ATP1B1. Interacts (via intracellular region) with SHMT2. Interacts (via intracellular region) with UFC1. Post-translationally, undergoes proteolysis by a metalloprotease and gives rise to a soluble form. In terms of tissue distribution, expressed mainly in adult brain, bone marrow and stromal cells. Expressed in diverse regions of the brain, including the cortex, hippocampus, striatum, olfactory bulb and cerebellum. In brain, expressed in pontine nucleus neurons (at protein level). In hippocampus, produced in both the dentate granule neurons and the GABAergic neurons, but not the CA3 neurons. Expressed in subpopulations of vomeronasal sensory neurons. Expressed in a subset of neurons in dorsal root ganglia.

It localises to the cell membrane. The protein resides in the cell projection. The protein localises to the axon. It is found in the dendrite. Its subcellular location is the secreted. Functionally, synaptic adhesion molecule required for the formation of target-specific synapses. Required for formation of target-specific synapses at hippocampal mossy fiber synapses. Required for formation of mossy fiber filopodia, the synaptic structures connecting dentate granule and GABA neurons. Probably acts as a homophilic adhesion molecule that promotes trans-cellular interactions and stabilize mossy fiber filipodia contact and subsequent synapse formation. Required for the coalescence of vomeronasal sensory neuron axons. May be involved in the hematopoietic supportive capacity of stroma cells; the secreted extracellular domain is directly responsible for supporting hematopoietic stem cells. The sequence is that of Kin of IRRE-like protein 3 (Kirrel3) from Mus musculus (Mouse).